A 348-amino-acid polypeptide reads, in one-letter code: Dihydroorotase (348 aa).

His14 and His16 together coordinate Zn(2+). Residues 16 to 18 (HLR) and Asn42 contribute to the substrate site. Residues Lys100, His137, and His175 each coordinate Zn(2+). Lys100 bears the N6-carboxylysine mark. His137 provides a ligand contact to substrate. Leu220 lines the substrate pocket. Asp248 provides a ligand contact to Zn(2+). Residue Asp248 is part of the active site. Substrate is bound by residues His252 and Ala264.

It belongs to the metallo-dependent hydrolases superfamily. DHOase family. Class II DHOase subfamily. Homodimer. Zn(2+) is required as a cofactor.

It carries out the reaction (S)-dihydroorotate + H2O = N-carbamoyl-L-aspartate + H(+). The protein operates within pyrimidine metabolism; UMP biosynthesis via de novo pathway; (S)-dihydroorotate from bicarbonate: step 3/3. Functionally, catalyzes the reversible cyclization of carbamoyl aspartate to dihydroorotate. In Pseudomonas fluorescens (strain SBW25), this protein is Dihydroorotase.